The primary structure comprises 486 residues: Protein nucleotidyltransferase YdiU (486 aa).

Positions 90, 92, 93, 113, 125, 126, 176, and 183 each coordinate ATP. The active-site Proton acceptor is D252. Mg(2+)-binding residues include N253 and D262. D262 lines the ATP pocket.

It belongs to the SELO family. Requires Mg(2+) as cofactor. It depends on Mn(2+) as a cofactor.

The enzyme catalyses L-seryl-[protein] + ATP = 3-O-(5'-adenylyl)-L-seryl-[protein] + diphosphate. It carries out the reaction L-threonyl-[protein] + ATP = 3-O-(5'-adenylyl)-L-threonyl-[protein] + diphosphate. It catalyses the reaction L-tyrosyl-[protein] + ATP = O-(5'-adenylyl)-L-tyrosyl-[protein] + diphosphate. The catalysed reaction is L-histidyl-[protein] + UTP = N(tele)-(5'-uridylyl)-L-histidyl-[protein] + diphosphate. The enzyme catalyses L-seryl-[protein] + UTP = O-(5'-uridylyl)-L-seryl-[protein] + diphosphate. It carries out the reaction L-tyrosyl-[protein] + UTP = O-(5'-uridylyl)-L-tyrosyl-[protein] + diphosphate. Nucleotidyltransferase involved in the post-translational modification of proteins. It can catalyze the addition of adenosine monophosphate (AMP) or uridine monophosphate (UMP) to a protein, resulting in modifications known as AMPylation and UMPylation. In Pseudomonas paraeruginosa (strain DSM 24068 / PA7) (Pseudomonas aeruginosa (strain PA7)), this protein is Protein nucleotidyltransferase YdiU.